Consider the following 891-residue polypeptide: Translation initiation factor IF-2 (891 aa).

Residues 390-559 (NRAPIVTIMG…LLQSDMLELK (170 aa)) enclose the tr-type G domain. The tract at residues 399 to 406 (GHVDHGKT) is G1. Residue 399-406 (GHVDHGKT) coordinates GTP. The G2 stretch occupies residues 424-428 (GITQS). Positions 445 to 448 (DTPG) are G3. GTP contacts are provided by residues 445 to 449 (DTPGH) and 499 to 502 (NKID). The tract at residues 499-502 (NKID) is G4. Residues 535 to 537 (SAT) are G5.

Belongs to the TRAFAC class translation factor GTPase superfamily. Classic translation factor GTPase family. IF-2 subfamily.

The protein localises to the cytoplasm. Its function is as follows. One of the essential components for the initiation of protein synthesis. Protects formylmethionyl-tRNA from spontaneous hydrolysis and promotes its binding to the 30S ribosomal subunits. Also involved in the hydrolysis of GTP during the formation of the 70S ribosomal complex. The polypeptide is Translation initiation factor IF-2 (Blochmanniella pennsylvanica (strain BPEN)).